Here is a 193-residue protein sequence, read N- to C-terminus: NADH-quinone oxidoreductase subunit B (193 aa).

Residues Cys72, Cys73, Cys137, and Cys167 each contribute to the [4Fe-4S] cluster site.

Belongs to the complex I 20 kDa subunit family. As to quaternary structure, NDH-1 is composed of 14 different subunits. Subunits NuoB, C, D, E, F, and G constitute the peripheral sector of the complex. The cofactor is [4Fe-4S] cluster.

The protein localises to the cell inner membrane. The enzyme catalyses a quinone + NADH + 5 H(+)(in) = a quinol + NAD(+) + 4 H(+)(out). Its function is as follows. NDH-1 shuttles electrons from NADH, via FMN and iron-sulfur (Fe-S) centers, to quinones in the respiratory chain. The immediate electron acceptor for the enzyme in this species is believed to be ubiquinone. Couples the redox reaction to proton translocation (for every two electrons transferred, four hydrogen ions are translocated across the cytoplasmic membrane), and thus conserves the redox energy in a proton gradient. This Phenylobacterium zucineum (strain HLK1) protein is NADH-quinone oxidoreductase subunit B.